Consider the following 298-residue polypeptide: GPN-loop GTPase QQT1 (298 aa).

12–17 (GSGKTT) is a binding site for GTP. The Gly-Pro-Asn (GPN)-loop; involved in dimer interface motif lies at 69–71 (GPN). A GTP-binding site is contributed by 173–176 (SKID).

Belongs to the GPN-loop GTPase family. In terms of assembly, heterodimer with QQT2. Expressed in vascular tissues, root tips, apical and root meristematic regions, and floral primordia.

Its subcellular location is the cytoplasm. It is found in the nucleus. It localises to the cytoskeleton. The protein localises to the spindle. The protein resides in the phragmoplast. Its function is as follows. Small GTPase that is essential for the correct formation of the tangential divisions in early embryos. Associates with microtubule during mitosis and may function in the positioning of the division plane. May participate in the patterning of the early embryo at the octant-dermatogen transition. Is crucial for normal development of the plant. In Arabidopsis thaliana (Mouse-ear cress), this protein is GPN-loop GTPase QQT1.